The sequence spans 332 residues: Anthranilate phosphoribosyltransferase (332 aa).

Residues glycine 79, glycine 82 to aspartate 83, serine 87, asparagine 89 to threonine 92, lysine 107 to serine 115, and serine 119 each bind 5-phospho-alpha-D-ribose 1-diphosphate. An anthranilate-binding site is contributed by glycine 79. Serine 91 is a Mg(2+) binding site. Asparagine 110 contributes to the anthranilate binding site. Arginine 165 contacts anthranilate. The Mg(2+) site is built by aspartate 223 and glutamate 224.

Belongs to the anthranilate phosphoribosyltransferase family. In terms of assembly, homodimer. The cofactor is Mg(2+).

It catalyses the reaction N-(5-phospho-beta-D-ribosyl)anthranilate + diphosphate = 5-phospho-alpha-D-ribose 1-diphosphate + anthranilate. The protein operates within amino-acid biosynthesis; L-tryptophan biosynthesis; L-tryptophan from chorismate: step 2/5. Its function is as follows. Catalyzes the transfer of the phosphoribosyl group of 5-phosphorylribose-1-pyrophosphate (PRPP) to anthranilate to yield N-(5'-phosphoribosyl)-anthranilate (PRA). In Serratia proteamaculans (strain 568), this protein is Anthranilate phosphoribosyltransferase.